We begin with the raw amino-acid sequence, 170 residues long: Large ribosomal subunit protein uL10 (170 aa).

Belongs to the universal ribosomal protein uL10 family. As to quaternary structure, part of the ribosomal stalk of the 50S ribosomal subunit. The N-terminus interacts with L11 and the large rRNA to form the base of the stalk. The C-terminus forms an elongated spine to which L12 dimers bind in a sequential fashion forming a multimeric L10(L12)X complex.

In terms of biological role, forms part of the ribosomal stalk, playing a central role in the interaction of the ribosome with GTP-bound translation factors. The chain is Large ribosomal subunit protein uL10 from Fusobacterium nucleatum subsp. nucleatum (strain ATCC 25586 / DSM 15643 / BCRC 10681 / CIP 101130 / JCM 8532 / KCTC 2640 / LMG 13131 / VPI 4355).